A 555-amino-acid polypeptide reads, in one-letter code: Formate--tetrahydrofolate ligase (555 aa).

65 to 72 (TPAGEGKS) contacts ATP.

It belongs to the formate--tetrahydrofolate ligase family.

The catalysed reaction is (6S)-5,6,7,8-tetrahydrofolate + formate + ATP = (6R)-10-formyltetrahydrofolate + ADP + phosphate. It participates in one-carbon metabolism; tetrahydrofolate interconversion. This is Formate--tetrahydrofolate ligase from Staphylococcus aureus (strain bovine RF122 / ET3-1).